Reading from the N-terminus, the 374-residue chain is Queuine tRNA-ribosyltransferase (374 aa).

Aspartate 89 (proton acceptor) is an active-site residue. Substrate is bound by residues 89 to 93, aspartate 143, glutamine 187, and glycine 214; that span reads DSGGF. The interval 245–251 is RNA binding; sequence GVGKPED. The active-site Nucleophile is aspartate 264. The tract at residues 269–273 is RNA binding; important for wobble base 34 recognition; sequence TRNAR. 4 residues coordinate Zn(2+): cysteine 302, cysteine 304, cysteine 307, and histidine 333.

It belongs to the queuine tRNA-ribosyltransferase family. As to quaternary structure, homodimer. Within each dimer, one monomer is responsible for RNA recognition and catalysis, while the other monomer binds to the replacement base PreQ1. Zn(2+) is required as a cofactor.

The enzyme catalyses 7-aminomethyl-7-carbaguanine + guanosine(34) in tRNA = 7-aminomethyl-7-carbaguanosine(34) in tRNA + guanine. It participates in tRNA modification; tRNA-queuosine biosynthesis. In terms of biological role, catalyzes the base-exchange of a guanine (G) residue with the queuine precursor 7-aminomethyl-7-deazaguanine (PreQ1) at position 34 (anticodon wobble position) in tRNAs with GU(N) anticodons (tRNA-Asp, -Asn, -His and -Tyr). Catalysis occurs through a double-displacement mechanism. The nucleophile active site attacks the C1' of nucleotide 34 to detach the guanine base from the RNA, forming a covalent enzyme-RNA intermediate. The proton acceptor active site deprotonates the incoming PreQ1, allowing a nucleophilic attack on the C1' of the ribose to form the product. After dissociation, two additional enzymatic reactions on the tRNA convert PreQ1 to queuine (Q), resulting in the hypermodified nucleoside queuosine (7-(((4,5-cis-dihydroxy-2-cyclopenten-1-yl)amino)methyl)-7-deazaguanosine). The sequence is that of Queuine tRNA-ribosyltransferase from Shewanella oneidensis (strain ATCC 700550 / JCM 31522 / CIP 106686 / LMG 19005 / NCIMB 14063 / MR-1).